A 242-amino-acid chain; its full sequence is Myb-related protein MYBAS2 (242 aa).

2 consecutive HTH myb-type domains span residues 5–61 (REEI…HPGL) and 62–112 (KRGR…RKKA). Residues 33–57 (WDFIAKVSGLNRTGKSCRLRWVNYL) constitute a DNA-binding region (H-T-H motif). The Bipartite nuclear localization signal 1 motif lies at 62–65 (KRGR). A DNA-binding region (H-T-H motif) is located at residues 85–108 (WSRIARRLPGRTDNEIKNYWRTHM). The Bipartite nuclear localization signal 2 motif lies at 109–117 (RKKAQERKS). Residues 110 to 133 (KKAQERKSNMSPSSSSSSLTYQSC) form a disordered region. Over residues 118-133 (NMSPSSSSSSLTYQSC) the composition is skewed to low complexity.

The protein resides in the nucleus. Transcription factor. The chain is Myb-related protein MYBAS2 (MYBAS2) from Oryza sativa subsp. japonica (Rice).